Reading from the N-terminus, the 353-residue chain is Phospho-N-acetylmuramoyl-pentapeptide-transferase (353 aa).

10 consecutive transmembrane segments (helical) span residues 24–44 (LGFF…ILWA), 66–86 (TPTM…VLCA), 88–108 (LGNL…FVGF), 129–149 (FGML…KGLD), 160–180 (PLFE…FLST), 192–212 (GLAS…VYVA), 229–249 (VGEL…FLWY), 256–276 (VFMG…NAIV), 281–301 (ILLV…ILQV), and 330–350 (KVIV…LLSL).

It belongs to the glycosyltransferase 4 family. MraY subfamily. Requires Mg(2+) as cofactor.

It is found in the cell inner membrane. It catalyses the reaction UDP-N-acetyl-alpha-D-muramoyl-L-alanyl-gamma-D-glutamyl-meso-2,6-diaminopimeloyl-D-alanyl-D-alanine + di-trans,octa-cis-undecaprenyl phosphate = di-trans,octa-cis-undecaprenyl diphospho-N-acetyl-alpha-D-muramoyl-L-alanyl-D-glutamyl-meso-2,6-diaminopimeloyl-D-alanyl-D-alanine + UMP. The protein operates within cell wall biogenesis; peptidoglycan biosynthesis. Catalyzes the initial step of the lipid cycle reactions in the biosynthesis of the cell wall peptidoglycan: transfers peptidoglycan precursor phospho-MurNAc-pentapeptide from UDP-MurNAc-pentapeptide onto the lipid carrier undecaprenyl phosphate, yielding undecaprenyl-pyrophosphoryl-MurNAc-pentapeptide, known as lipid I. This Helicobacter pylori (strain ATCC 700392 / 26695) (Campylobacter pylori) protein is Phospho-N-acetylmuramoyl-pentapeptide-transferase.